The primary structure comprises 193 residues: Acyl carrier protein phosphodiesterase (193 aa).

The protein belongs to the AcpH family.

The enzyme catalyses holo-[ACP] + H2O = apo-[ACP] + (R)-4'-phosphopantetheine + H(+). In terms of biological role, converts holo-ACP to apo-ACP by hydrolytic cleavage of the phosphopantetheine prosthetic group from ACP. This Escherichia coli O7:K1 (strain IAI39 / ExPEC) protein is Acyl carrier protein phosphodiesterase.